The primary structure comprises 380 residues: Glucose-1-phosphate adenylyltransferase (380 aa).

Residues Tyr100, Gly165, 180 to 181 (EK), and Ser191 each bind alpha-D-glucose 1-phosphate.

Belongs to the bacterial/plant glucose-1-phosphate adenylyltransferase family. In terms of assembly, homotetramer.

It carries out the reaction alpha-D-glucose 1-phosphate + ATP + H(+) = ADP-alpha-D-glucose + diphosphate. The protein operates within glycan biosynthesis; glycogen biosynthesis. In terms of biological role, involved in the biosynthesis of ADP-glucose, a building block required for the elongation reactions to produce glycogen. Catalyzes the reaction between ATP and alpha-D-glucose 1-phosphate (G1P) to produce pyrophosphate and ADP-Glc. This is Glucose-1-phosphate adenylyltransferase from Clostridium acetobutylicum (strain ATCC 824 / DSM 792 / JCM 1419 / IAM 19013 / LMG 5710 / NBRC 13948 / NRRL B-527 / VKM B-1787 / 2291 / W).